The following is a 366-amino-acid chain: Alanine racemase (366 aa).

The active-site Proton acceptor; specific for D-alanine is lysine 40. Lysine 40 is subject to N6-(pyridoxal phosphate)lysine. Residue arginine 136 coordinates substrate. The active-site Proton acceptor; specific for L-alanine is tyrosine 263. Residue methionine 310 coordinates substrate.

This sequence belongs to the alanine racemase family. It depends on pyridoxal 5'-phosphate as a cofactor.

The catalysed reaction is L-alanine = D-alanine. It functions in the pathway amino-acid biosynthesis; D-alanine biosynthesis; D-alanine from L-alanine: step 1/1. Catalyzes the interconversion of L-alanine and D-alanine. May also act on other amino acids. The sequence is that of Alanine racemase (alr) from Streptococcus pyogenes serotype M12 (strain MGAS2096).